Consider the following 465-residue polypeptide: Amino-acid carrier protein AlsT (465 aa).

Helical transmembrane passes span 20 to 40 (LFYILIGLGLFFTIRFGFIQF), 82 to 102 (VALAIATGGPGAVFWMWVVAA), 142 to 162 (WLGIVFAILITVSFGLIFNAV), 177 to 197 (VNKIVVAIVLAVLTAFIIFGG), 208 to 228 (IVPVMAGIYILIALFVVITNI), 241 to 261 (NALGFEQVVGGGIGGIIVIGA), 296 to 316 (LGVFFDTFIICTSTAFIILLY), 336 to 356 (IGGWAPTFIAVAMFLFAFSSV), 382 to 402 (IAVIAMVVYGSLSGFQIVWDM), and 405 to 425 (LFMGIMALINLIVIALLSNVA).

The protein belongs to the alanine or glycine:cation symporter (AGCS) (TC 2.A.25) family.

The protein resides in the cell membrane. This Bacillus subtilis (strain 168) protein is Amino-acid carrier protein AlsT (alsT).